Reading from the N-terminus, the 132-residue chain is Histone H2A.Z (132 aa).

Basic residues predominate over residues Met1–Lys11. The segment at Met1–Arg27 is disordered. Ser2 bears the N-acetylserine mark. Lys4, Lys11, and Lys13 each carry N6-acetyllysine.

It belongs to the histone H2A family. The nucleosome is a histone octamer containing two molecules each of H2A, H2B, H3 and H4 assembled in one H3-H4 heterotetramer and two H2A-H2B heterodimers. The octamer wraps approximately 147 bp of DNA. H2A or its variant H2A.Z forms a heterodimer with H2B. H2A.Z associates with the VPS72/SWC2 subunit of the SWR1 chromatin remodeling complex. Also interacts with RBP1/DNA-directed RNA polymerase II largest subunit. Acetylated once deposited into chromatin.

The protein resides in the nucleus. It is found in the chromosome. Variant histone H2A which can replace H2A in some nucleosomes. Nucleosomes wrap and compact DNA into chromatin, limiting DNA accessibility to the cellular machineries which require DNA as a template. Histones thereby play a central role in transcription regulation, DNA repair, DNA replication and chromosomal stability. DNA accessibility is regulated via a complex set of post-translational modifications of histones, also called histone code, and nucleosome remodeling. This variant is enriched at promoters, it may keep them in a repressed state until the appropriate activation signal is received. Near telomeres, it may counteract gene silencing caused by the spread of heterochromatin proteins. Required for the RNA polymerase II and SPT15/TBP recruitment to the target genes. Involved in chromosome stability. The polypeptide is Histone H2A.Z (HTZ1) (Debaryomyces hansenii (strain ATCC 36239 / CBS 767 / BCRC 21394 / JCM 1990 / NBRC 0083 / IGC 2968) (Yeast)).